A 402-amino-acid polypeptide reads, in one-letter code: 3-dehydroquinate synthase (402 aa).

This sequence belongs to the archaeal-type DHQ synthase family.

It catalyses the reaction 2-amino-2,3,7-trideoxy-D-lyxo-hept-6-ulosonate + NAD(+) + H2O = 3-dehydroquinate + NH4(+) + NADH + H(+). Catalyzes the oxidative deamination and cyclization of 2-amino-3,7-dideoxy-D-threo-hept-6-ulosonic acid (ADH) to yield 3-dehydroquinate (DHQ), which is fed into the canonical shikimic pathway of aromatic amino acid biosynthesis. The sequence is that of 3-dehydroquinate synthase from Methanopyrus kandleri (strain AV19 / DSM 6324 / JCM 9639 / NBRC 100938).